A 368-amino-acid polypeptide reads, in one-letter code: Solute carrier family 35 member G1 (368 aa).

The next 10 helical transmembrane spans lie at Gly72 to Val92, Ala100 to Ile120, Leu134 to Phe154, Asp161 to Leu181, Ala190 to Phe210, Ile225 to Leu245, Leu256 to Ile276, Leu289 to Val309, Leu316 to Phe336, and Pro340 to Ile360. EamA domains follow at residues Phe83–Arg205 and Val236–Ile360.

Belongs to the TMEM20 family. As to quaternary structure, interacts with STIM1; stimulated by depletion of intracellular calcium. Interacts with ORAI1. Interacts with the plasma membrane calcium-transporting ATPases ATP2B1 and ATP2B4. Interacts with ATP1A1, ATP2A2, KPNB1 and XPO1.

The protein resides in the cell membrane. The protein localises to the endoplasmic reticulum membrane. May play a role in intracellular calcium sensing and homeostasis. May act as a negative regulator of plasma membrane calcium-transporting ATPases preventing calcium efflux from the cell. This is Solute carrier family 35 member G1 (Slc35g1) from Mus musculus (Mouse).